A 326-amino-acid polypeptide reads, in one-letter code: ELAV-like protein 1-B (326 aa).

RRM domains lie at 20 to 98, 106 to 186, and 244 to 322; these read TNLI…FARP, ANLY…FAAN, and WCIF…FKTS.

It belongs to the RRM elav family. In terms of assembly, interacts (via RRM3) with cirbp. Unable to form oligomers. Part of a ribonucleoprotein (RNP) complex, at least composed of elavl1/elrA and/or elavl2/elrB, igf2bp3/vg1RBP, ddx6/Xp54, ybx2/frgy2, lsm14b/rap55b and, in a subset of RNP complexes, stau1/staufen.

It localises to the cytoplasm. Its subcellular location is the cell cortex. RNA-binding protein that binds to the 3'-UTR region of mRNAs and increases their stability. Involved in embryonic stem cells (ESCs) differentiation: preferentially binds mRNAs that are not methylated by N6-methyladenosine (m6A), stabilizing them, promoting ESCs differentiation. Binds to poly-U elements and AU-rich elements (AREs) in the 3'-UTR of target mRNAs. Acts cooperatively with cribp to stabilize AU-rich sequence (ARE)-containing mRNAs. May play a role during gastrulation. Required for the vegetal localization of vg1 mRNA. This Xenopus laevis (African clawed frog) protein is ELAV-like protein 1-B (elavl1-b).